Reading from the N-terminus, the 283-residue chain is ATP synthase gamma chain (283 aa).

This sequence belongs to the ATPase gamma chain family. As to quaternary structure, F-type ATPases have 2 components, CF(1) - the catalytic core - and CF(0) - the membrane proton channel. CF(1) has five subunits: alpha(3), beta(3), gamma(1), delta(1), epsilon(1). CF(0) has three main subunits: a, b and c.

Its subcellular location is the cell membrane. Produces ATP from ADP in the presence of a proton gradient across the membrane. The gamma chain is believed to be important in regulating ATPase activity and the flow of protons through the CF(0) complex. The chain is ATP synthase gamma chain from Clostridium botulinum (strain Eklund 17B / Type B).